The primary structure comprises 567 residues: R-linalool synthase QH1, chloroplastic (567 aa).

A chloroplast-targeting transit peptide spans 1 to 24 (GNAYMRIYSTKTTRITANATVNAA). (2E)-geranyl diphosphate is bound by residues R282, D319, D323, R460, and D463. Mg(2+)-binding residues include D319 and D323. Positions 319-323 (DDVYD) match the DDXXD motif motif. 3 residues coordinate Mg(2+): D463, T467, and E471.

The protein belongs to the terpene synthase family. Tpsb subfamily. The cofactor is Mg(2+). Highly expressed in leaves and lower levels in inflorescences. Not detected in stems, stem epidermis, stem stele or roots.

The protein localises to the plastid. It is found in the chloroplast. The catalysed reaction is (2E)-geranyl diphosphate + H2O = (R)-linalool + diphosphate. It participates in secondary metabolite biosynthesis; terpenoid biosynthesis. Monoterpene synthase that catalyzes the formation of (3R)-linalool from geranyl diphosphate, but not from isopentenyl diphosphate, dimethylallyl diphosphate, chrysanthemyl diphosphate, farnesyl diphosphate, (+)-copalyl diphosphate or geranylgeranyl diphosphate. This chain is R-linalool synthase QH1, chloroplastic (QH1), found in Artemisia annua (Sweet wormwood).